The following is a 504-amino-acid chain: Glutamate--tRNA ligase (504 aa).

The 'HIGH' region signature appears at 9–19 (PSPTGDPHVGT). Residues 248 to 252 (KISKR) carry the 'KMSKS' region motif. K251 contacts ATP.

The protein belongs to the class-I aminoacyl-tRNA synthetase family. Glutamate--tRNA ligase type 1 subfamily. In terms of assembly, monomer.

The protein localises to the cytoplasm. The enzyme catalyses tRNA(Glu) + L-glutamate + ATP = L-glutamyl-tRNA(Glu) + AMP + diphosphate. Functionally, catalyzes the attachment of glutamate to tRNA(Glu) in a two-step reaction: glutamate is first activated by ATP to form Glu-AMP and then transferred to the acceptor end of tRNA(Glu). This is Glutamate--tRNA ligase from Acidothermus cellulolyticus (strain ATCC 43068 / DSM 8971 / 11B).